Here is a 38-residue protein sequence, read N- to C-terminus: Potassium channel toxin alpha-KTx 2.10 (38 aa).

3 disulfides stabilise this stretch: cysteine 7-cysteine 29, cysteine 13-cysteine 34, and cysteine 17-cysteine 36.

As to expression, expressed by the venom gland.

The protein resides in the secreted. Functionally, blocks human voltage-gated potassium (Kv) channel Kv1.2/KCNA2. Does not inhibit human Kv1.1/KCNA1 at 100nM concentration. This Centruroides bonito (Scorpion) protein is Potassium channel toxin alpha-KTx 2.10.